The sequence spans 162 residues: AP-1 complex subunit sigma-2 (162 aa).

It belongs to the adaptor complexes small subunit family. Adaptor protein complex 1 (AP-1) is a heterotetramer composed of two large adaptins (gamma-type subunit and beta-type subunit), a medium adaptin (mu-type subunit) and a small adaptin (sigma-type subunit). Expressed in roots, stems, leaves, flowers and siliques (developing fruits and seeds).

Its subcellular location is the golgi apparatus. The protein localises to the cytoplasmic vesicle. The protein resides in the clathrin-coated vesicle membrane. Subunit of clathrin-associated adaptor protein complex 1 that plays a role in protein sorting at the trans-Golgi network and early endosomes (TGN/EE). The AP complexes mediate the recruitment of clathrin to membranes and the recognition of sorting signals within the cytosolic tails of transmembrane cargo molecules. The chain is AP-1 complex subunit sigma-2 (AAP19-2) from Arabidopsis thaliana (Mouse-ear cress).